A 354-amino-acid polypeptide reads, in one-letter code: Dihydroflavonol 4-reductase (354 aa).

NADP(+) contacts are provided by lysine 44 and tyrosine 163.

The protein belongs to the NAD(P)-dependent epimerase/dehydratase family. Dihydroflavonol-4-reductase subfamily.

It catalyses the reaction a (2R,3S,4S)-leucoanthocyanidin + NADP(+) = a (2R,3R)-dihydroflavonol + NADPH + H(+). The catalysed reaction is (2S)-flavan-4-ol + NADP(+) = (2S)-flavanone + NADPH + H(+). The protein operates within pigment biosynthesis; anthocyanin biosynthesis. Its function is as follows. Bifunctional enzyme involved in flavonoid metabolism. In Hordeum vulgare (Barley), this protein is Dihydroflavonol 4-reductase (ANT18).